The primary structure comprises 223 residues: N-terminal Xaa-Pro-Lys N-methyltransferase 1 (223 aa).

N-acetylmethionine is present on Met-1. Thr-2 carries the N-acetylthreonine; in N-terminal Xaa-Pro-Lys N-methyltransferase 1, N-terminally processed modification. S-adenosyl-L-methionine is bound by residues Gly-69, Arg-74, 91–93, 119–120, and Gln-135; these read DVT and LQ.

This sequence belongs to the methyltransferase superfamily. NTM1 family.

It localises to the nucleus. It catalyses the reaction N-terminal L-alanyl-L-prolyl-L-lysyl-[protein] + 3 S-adenosyl-L-methionine = N-terminal N,N,N-trimethyl-L-alanyl-L-prolyl-L-lysyl-[protein] + 3 S-adenosyl-L-homocysteine + 3 H(+). It carries out the reaction N-terminal L-seryl-L-prolyl-L-lysyl-[protein] + 3 S-adenosyl-L-methionine = N-terminal N,N,N-trimethyl-L-seryl-L-prolyl-L-lysyl-[protein] + 3 S-adenosyl-L-homocysteine + 3 H(+). The catalysed reaction is N-terminal L-prolyl-L-prolyl-L-lysyl-[protein] + 2 S-adenosyl-L-methionine = N-terminal N,N-dimethyl-L-prolyl-L-prolyl-L-lysyl-[protein] + 2 S-adenosyl-L-homocysteine + 2 H(+). In terms of biological role, distributive alpha-N-methyltransferase that methylates the N-terminus of target proteins containing the N-terminal motif [Ala/Gly/Pro/Ser]-Pro-Lys when the initiator Met is cleaved. Specifically catalyzes mono-, di- or tri-methylation of the exposed alpha-amino group of the Ala, Gly or Ser residue in the [Ala/Gly/Ser]-Pro-Lys motif and mono- or di-methylation of Pro in the Pro-Pro-Lys motif. Some of the substrates may be primed by NTMT2-mediated monomethylation. Catalyzes the trimethylation of the N-terminal Gly in CENPA (after removal of Met-1). Responsible for the N-terminal methylation of KLHL31, MYL2, MYL3, RB1, RCC1, RPL23A and SET. Required during mitosis for normal bipolar spindle formation and chromosome segregation via its action on RCC1. In Bos taurus (Bovine), this protein is N-terminal Xaa-Pro-Lys N-methyltransferase 1 (NTMT1).